Reading from the N-terminus, the 185-residue chain is Probable RNA 2'-phosphotransferase (185 aa).

It belongs to the KptA/TPT1 family.

Functionally, removes the 2'-phosphate from RNA via an intermediate in which the phosphate is ADP-ribosylated by NAD followed by a presumed transesterification to release the RNA and generate ADP-ribose 1''-2''-cyclic phosphate (APPR&gt;P). May function as an ADP-ribosylase. This Bacillus thuringiensis subsp. konkukian (strain 97-27) protein is Probable RNA 2'-phosphotransferase.